Consider the following 647-residue polypeptide: DNA mismatch repair protein MutL (647 aa).

The protein belongs to the DNA mismatch repair MutL/HexB family.

Its function is as follows. This protein is involved in the repair of mismatches in DNA. It is required for dam-dependent methyl-directed DNA mismatch repair. May act as a 'molecular matchmaker', a protein that promotes the formation of a stable complex between two or more DNA-binding proteins in an ATP-dependent manner without itself being part of a final effector complex. In Bacillus thuringiensis subsp. konkukian (strain 97-27), this protein is DNA mismatch repair protein MutL.